The primary structure comprises 170 residues: Flavodoxin (170 aa).

One can recognise a Flavodoxin-like domain in the interval 4 to 165; it reads IGLFYGTQTG…RIKTWVSQLK (162 aa).

Belongs to the flavodoxin family. The cofactor is FMN.

Low-potential electron donor to a number of redox enzymes. The protein is Flavodoxin (isiB) of Synechococcus elongatus (strain ATCC 33912 / PCC 7942 / FACHB-805) (Anacystis nidulans R2).